Reading from the N-terminus, the 152-residue chain is Endoribonuclease YbeY (152 aa).

Zn(2+) contacts are provided by His112, His116, and His122.

Belongs to the endoribonuclease YbeY family. Zn(2+) serves as cofactor.

Its subcellular location is the cytoplasm. Single strand-specific metallo-endoribonuclease involved in late-stage 70S ribosome quality control and in maturation of the 3' terminus of the 16S rRNA. In Pseudoalteromonas translucida (strain TAC 125), this protein is Endoribonuclease YbeY.